Reading from the N-terminus, the 511-residue chain is DNA nucleotidylexotransferase (511 aa).

Residues 1-26 form a disordered region; it reads MDPLQTAHAGPRKKRPRQTGASMAST. The Nuclear localization signal signature appears at 11–17; that stretch reads PRKKRPR. Positions 27–124 constitute a BRCT domain; the sequence is PQDVRFQDLV…KPVETTGKHQ (98 aa). Residue serine 134 is modified to Phosphoserine. Positions 151 to 511 are mediates interaction with DNTTIP2; that stretch reads SQYACQRRTT…DYIEPSERNA (361 aa). The interval 258 to 262 is involved in DNA binding; that stretch reads VGLKT. A 2'-deoxyribonucleoside 5'-triphosphate is bound by residues 333–338 and 342–345; these read GFRRGK and HDVD. Mg(2+) contacts are provided by aspartate 343, aspartate 345, and aspartate 435. An a 2'-deoxyribonucleoside 5'-triphosphate-binding site is contributed by 450-451; that stretch reads GW.

This sequence belongs to the DNA polymerase type-X family. As to quaternary structure, interacts with PRP19 and DNTTIP1. Forms a ternary complex with DNTTIP2 and core histone. Released from this complex by PCNA. Interacts with TRERF1. The cofactor is Mg(2+).

The protein resides in the nucleus. The enzyme catalyses DNA(n) + a 2'-deoxyribonucleoside 5'-triphosphate = DNA(n+1) + diphosphate. Functionally, template-independent DNA polymerase which catalyzes the random addition of deoxynucleoside 5'-triphosphate to the 3'-end of a DNA initiator. One of the in vivo functions of this enzyme is the addition of nucleotides at the junction (N region) of rearranged Ig heavy chain and T-cell receptor gene segments during the maturation of B- and T-cells. The sequence is that of DNA nucleotidylexotransferase (DNTT) from Eulemur macaco (Black lemur).